We begin with the raw amino-acid sequence, 334 residues long: Phosphate acyltransferase (334 aa).

The protein belongs to the PlsX family. In terms of assembly, homodimer. Probably interacts with PlsY.

It localises to the cytoplasm. The enzyme catalyses a fatty acyl-[ACP] + phosphate = an acyl phosphate + holo-[ACP]. It functions in the pathway lipid metabolism; phospholipid metabolism. Catalyzes the reversible formation of acyl-phosphate (acyl-PO(4)) from acyl-[acyl-carrier-protein] (acyl-ACP). This enzyme utilizes acyl-ACP as fatty acyl donor, but not acyl-CoA. The sequence is that of Phosphate acyltransferase from Mycoplasma capricolum subsp. capricolum (strain California kid / ATCC 27343 / NCTC 10154).